We begin with the raw amino-acid sequence, 109 residues long: Small ribosomal subunit protein uS10c (109 aa).

The protein belongs to the universal ribosomal protein uS10 family. In terms of assembly, part of the 30S ribosomal subunit.

The protein localises to the plastid. It localises to the chloroplast. Involved in the binding of tRNA to the ribosomes. The sequence is that of Small ribosomal subunit protein uS10c from Cyanidium caldarium (Red alga).